The sequence spans 439 residues: Probable guanine deaminase (439 aa).

Residues histidine 76 and histidine 78 each contribute to the Zn(2+) site. Substrate-binding positions include 78 to 81 (HYPQ), 203 to 204 (RF), 231 to 234 (HINE), and aspartate 321. The Zn(2+) site is built by histidine 231 and aspartate 321.

This sequence belongs to the metallo-dependent hydrolases superfamily. ATZ/TRZ family. Requires Zn(2+) as cofactor.

The catalysed reaction is guanine + H2O + H(+) = xanthine + NH4(+). Its pathway is purine metabolism; guanine degradation; xanthine from guanine: step 1/1. Its function is as follows. Catalyzes the hydrolytic deamination of guanine, producing xanthine and ammonia. In Deinococcus radiodurans (strain ATCC 13939 / DSM 20539 / JCM 16871 / CCUG 27074 / LMG 4051 / NBRC 15346 / NCIMB 9279 / VKM B-1422 / R1), this protein is Probable guanine deaminase (guaD).